An 858-amino-acid polypeptide reads, in one-letter code: Bifunctional uridylyltransferase/uridylyl-removing enzyme (858 aa).

A uridylyltransferase region spans residues 1-324 (MSASVAAPPP…PATSGVTRVL (324 aa)). Positions 325–681 (SPGRFVEKQG…ARPSPVGDAL (357 aa)) are uridylyl-removing. Residues 443–565 (VDQHILMVLR…VGNERRLTAL (123 aa)) enclose the HD domain. 2 consecutive ACT domains span residues 682–761 (QVLV…PEPS) and 790–858 (ILSV…AIAV).

It belongs to the GlnD family. Mg(2+) serves as cofactor.

It catalyses the reaction [protein-PII]-L-tyrosine + UTP = [protein-PII]-uridylyl-L-tyrosine + diphosphate. The catalysed reaction is [protein-PII]-uridylyl-L-tyrosine + H2O = [protein-PII]-L-tyrosine + UMP + H(+). Its activity is regulated as follows. Uridylyltransferase (UTase) activity is inhibited by glutamine, while glutamine activates uridylyl-removing (UR) activity. Functionally, modifies, by uridylylation and deuridylylation, the PII regulatory proteins (GlnB and homologs), in response to the nitrogen status of the cell that GlnD senses through the glutamine level. Under low glutamine levels, catalyzes the conversion of the PII proteins and UTP to PII-UMP and PPi, while under higher glutamine levels, GlnD hydrolyzes PII-UMP to PII and UMP (deuridylylation). Thus, controls uridylylation state and activity of the PII proteins, and plays an important role in the regulation of nitrogen assimilation and metabolism. The chain is Bifunctional uridylyltransferase/uridylyl-removing enzyme from Burkholderia thailandensis (strain ATCC 700388 / DSM 13276 / CCUG 48851 / CIP 106301 / E264).